We begin with the raw amino-acid sequence, 154 residues long: UPF0225 protein Spro_2712 (154 aa).

The protein belongs to the UPF0225 family.

This Serratia proteamaculans (strain 568) protein is UPF0225 protein Spro_2712.